A 215-amino-acid chain; its full sequence is NAD(P)H-hydrate epimerase (215 aa).

In terms of domain architecture, YjeF N-terminal spans 10–211 (AQRYDAHATN…DIGIYAQDRV (202 aa)). (6S)-NADPHX is bound at residue 58–62 (NNGGD). The K(+) site is built by Asn59 and Asp121. Residues 125 to 131 (GVGLTRD) and Asp154 contribute to the (6S)-NADPHX site. Residue Ser157 participates in K(+) binding.

The protein belongs to the NnrE/AIBP family. K(+) serves as cofactor.

It catalyses the reaction (6R)-NADHX = (6S)-NADHX. It carries out the reaction (6R)-NADPHX = (6S)-NADPHX. Its function is as follows. Catalyzes the epimerization of the S- and R-forms of NAD(P)HX, a damaged form of NAD(P)H that is a result of enzymatic or heat-dependent hydration. This is a prerequisite for the S-specific NAD(P)H-hydrate dehydratase to allow the repair of both epimers of NAD(P)HX. The sequence is that of NAD(P)H-hydrate epimerase from Levilactobacillus brevis (strain ATCC 367 / BCRC 12310 / CIP 105137 / JCM 1170 / LMG 11437 / NCIMB 947 / NCTC 947) (Lactobacillus brevis).